Consider the following 288-residue polypeptide: Proteasome assembly chaperone 1 (288 aa).

Ala-2 bears the N-acetylalanine mark. Residues 13-35 form a disordered region; that stretch reads PCRAGTEDEEEEEEGRRETPEDR. Thr-18 bears the Phosphothreonine mark. Residues 26 to 35 are compositionally biased toward basic and acidic residues; that stretch reads EGRRETPEDR. Thr-54 is subject to Phosphothreonine. The residue at position 180 (Ser-180) is a Phosphoserine. Position 264 is an N6-acetyllysine (Lys-264).

This sequence belongs to the PSMG1 family. As to quaternary structure, forms a heterodimer with PSMG2. The PSMG1-PSMG2 heterodimer interacts directly with the PSMA5 and PSMA7 proteasome alpha subunits. In terms of processing, degraded by the proteasome upon completion of 20S proteasome maturation. In the adult, detected in brain, colon, leukocytes, breast and testis. Widely expressed in the fetus. Also expressed in a variety of proliferating cell lines.

Its subcellular location is the cytoplasm. It is found in the endoplasmic reticulum. Its function is as follows. Chaperone protein which promotes assembly of the 20S proteasome as part of a heterodimer with PSMG2. The PSMG1-PSMG2 heterodimer binds to the PSMA5 and PSMA7 proteasome subunits, promotes assembly of the proteasome alpha subunits into the heteroheptameric alpha ring and prevents alpha ring dimerization. This is Proteasome assembly chaperone 1 from Homo sapiens (Human).